Reading from the N-terminus, the 344-residue chain is Phenylalanine--tRNA ligase alpha subunit (344 aa).

Mg(2+) is bound at residue Glu-259.

This sequence belongs to the class-II aminoacyl-tRNA synthetase family. Phe-tRNA synthetase alpha subunit type 1 subfamily. Tetramer of two alpha and two beta subunits. The cofactor is Mg(2+).

It is found in the cytoplasm. The enzyme catalyses tRNA(Phe) + L-phenylalanine + ATP = L-phenylalanyl-tRNA(Phe) + AMP + diphosphate + H(+). This chain is Phenylalanine--tRNA ligase alpha subunit, found in Nitrosospira multiformis (strain ATCC 25196 / NCIMB 11849 / C 71).